A 276-amino-acid polypeptide reads, in one-letter code: Rhamnulose-1-phosphate aldolase (276 aa).

E117 is a catalytic residue. The Zn(2+) site is built by H141, H143, and H212.

The protein belongs to the aldolase class II family. RhaD subfamily. In terms of assembly, homotetramer. Zn(2+) is required as a cofactor.

The protein resides in the cytoplasm. It carries out the reaction L-rhamnulose 1-phosphate = (S)-lactaldehyde + dihydroxyacetone phosphate. It participates in carbohydrate degradation; L-rhamnose degradation; glycerone phosphate from L-rhamnose: step 3/3. Its function is as follows. Catalyzes the reversible cleavage of L-rhamnulose-1-phosphate to dihydroxyacetone phosphate (DHAP) and L-lactaldehyde. This Enterobacter sp. (strain 638) protein is Rhamnulose-1-phosphate aldolase.